A 326-amino-acid polypeptide reads, in one-letter code: DnaJ homolog subfamily B member 6 (326 aa).

A J domain is found at 3 to 69 (DYYEVLGVQK…KKRDIYDRFG (67 aa)). Residues 249–326 (ALPFQPTNTR…KKKKSTKGSY (78 aa)) form a disordered region. At serine 277 the chain carries Phosphoserine.

As to quaternary structure, homooligomer.

The protein resides in the cytoplasm. It is found in the perinuclear region. Its subcellular location is the nucleus. In terms of biological role, has a stimulatory effect on the ATPase activity of HSP70 in a dose-dependent and time-dependent manner and hence acts as a co-chaperone of HSP70. Plays an indispensable role in the organization of KRT8/KRT18 filaments. Acts as an endogenous molecular chaperone for neuronal proteins including huntingtin. Suppresses aggregation and toxicity of polyglutamine-containing, aggregation-prone proteins. Also reduces cellular toxicity and caspase-3 activity. In Gallus gallus (Chicken), this protein is DnaJ homolog subfamily B member 6.